Here is a 329-residue protein sequence, read N- to C-terminus: DNA polymerase III subunit delta' (329 aa).

As to quaternary structure, component of the DNA clamp loading complex consisting of tau(3):delta(1):delta'(1). The DNA polymerase III holoenzyme complex contains at least 10 different subunits organized into 3 functionally essential subassemblies: the Pol III core, the beta sliding clamp processivity factor and the clamp-loading complex. The Pol III core (subunits alpha, epsilon and theta) contains the polymerase and the 3'-5' exonuclease proofreading activities. The polymerase is tethered to the template via the dimeric beta sliding clamp processivity factor. The DNA clamp-loading complex assembles the beta sliding clamp onto the primed template and plays a central role in the organization and communication at the replication fork.

It is found in the cytoplasm. The protein localises to the nucleoid. The catalysed reaction is DNA(n) + a 2'-deoxyribonucleoside 5'-triphosphate = DNA(n+1) + diphosphate. In terms of biological role, DNA polymerase III is a complex, multichain enzyme responsible for most of the replicative synthesis in bacteria. This chain is DNA polymerase III subunit delta' (holB), found in Bacillus subtilis (strain 168).